The following is a 161-amino-acid chain: MKVGIIMGSKSDWPTMKLAAEMLDRFGVEYETKVVSAHRTPHLLAEYASTAKERGLKVIIAGAGGAAHLPGMAAAFTSLPVLGVPVQSRALSGLDSLYSIVQMPKGIAVGTLAIGEAGAANAGLLAAQILGTHDENIMAKVEAFRSEQTESVLANPNPAED.

The substrate site is built by serine 9, aspartate 12, and arginine 39.

Belongs to the AIR carboxylase family. Class I subfamily.

The enzyme catalyses 5-carboxyamino-1-(5-phospho-D-ribosyl)imidazole + H(+) = 5-amino-1-(5-phospho-D-ribosyl)imidazole-4-carboxylate. The protein operates within purine metabolism; IMP biosynthesis via de novo pathway; 5-amino-1-(5-phospho-D-ribosyl)imidazole-4-carboxylate from 5-amino-1-(5-phospho-D-ribosyl)imidazole (N5-CAIR route): step 2/2. Functionally, catalyzes the conversion of N5-carboxyaminoimidazole ribonucleotide (N5-CAIR) to 4-carboxy-5-aminoimidazole ribonucleotide (CAIR). The protein is N5-carboxyaminoimidazole ribonucleotide mutase of Vibrio vulnificus (strain CMCP6).